The chain runs to 77 residues: Tachyplesin-2 (77 aa).

A signal peptide spans 1–23 (MKKLVIALCLMMVLAVMVEEAEA). Intrachain disulfides connect Cys-26/Cys-39 and Cys-30/Cys-35. The residue at position 40 (Arg-40) is an Arginine amide. Residues 41 to 77 (GKRNEVRQYRDRGYDVRAIPDETFFTRQDEDEDDDEE) constitute a propeptide that is removed on maturation.

Belongs to the tachyplesin/polyphemusin family. As to expression, hemocytes.

It localises to the secreted. Functionally, significantly inhibits the growth of Gram-negative and Gram-positive bacteria. This is Tachyplesin-2 from Tachypleus tridentatus (Japanese horseshoe crab).